A 342-amino-acid chain; its full sequence is Phosphate acyltransferase (342 aa).

It belongs to the PlsX family. Homodimer. Probably interacts with PlsY.

It is found in the cytoplasm. The enzyme catalyses a fatty acyl-[ACP] + phosphate = an acyl phosphate + holo-[ACP]. Its pathway is lipid metabolism; phospholipid metabolism. Catalyzes the reversible formation of acyl-phosphate (acyl-PO(4)) from acyl-[acyl-carrier-protein] (acyl-ACP). This enzyme utilizes acyl-ACP as fatty acyl donor, but not acyl-CoA. This is Phosphate acyltransferase from Shewanella amazonensis (strain ATCC BAA-1098 / SB2B).